The primary structure comprises 320 residues: Cytochrome f (320 aa).

The first 35 residues, 1 to 35, serve as a signal peptide directing secretion; the sequence is MQTRNAFSWLKKQITRSISVSLMIYILTRTSISSA. Residues tyrosine 36, cysteine 56, cysteine 59, and histidine 60 each contribute to the heme site. A helical transmembrane segment spans residues 286–306; it reads AQGLLFFLASVILAQIFLVLK.

The protein belongs to the cytochrome f family. As to quaternary structure, the 4 large subunits of the cytochrome b6-f complex are cytochrome b6, subunit IV (17 kDa polypeptide, petD), cytochrome f and the Rieske protein, while the 4 small subunits are PetG, PetL, PetM and PetN. The complex functions as a dimer. Heme serves as cofactor.

The protein localises to the plastid. The protein resides in the chloroplast thylakoid membrane. In terms of biological role, component of the cytochrome b6-f complex, which mediates electron transfer between photosystem II (PSII) and photosystem I (PSI), cyclic electron flow around PSI, and state transitions. This Nicotiana tomentosiformis (Tobacco) protein is Cytochrome f.